A 2111-amino-acid chain; its full sequence is Glutamate synthase [NADH] (2111 aa).

Cys69 functions as the Nucleophile in the catalytic mechanism. The 401-residue stretch at Cys69–Lys469 folds into the Glutamine amidotransferase type-2 domain. The tract at residues Gly969–Gly990 is disordered. Position 1139 to 1191 (Val1139 to Gly1191) interacts with FMN. The [3Fe-4S] cluster site is built by Cys1192, Cys1198, and Cys1203.

This sequence belongs to the glutamate synthase family. In terms of assembly, homotrimer. It depends on [3Fe-4S] cluster as a cofactor. FAD serves as cofactor. FMN is required as a cofactor.

It localises to the cytoplasm. The catalysed reaction is 2 L-glutamate + NAD(+) = L-glutamine + 2-oxoglutarate + NADH + H(+). It functions in the pathway amino-acid biosynthesis; L-glutamate biosynthesis via GLT pathway; L-glutamate from 2-oxoglutarate and L-glutamine (NAD(+) route): step 1/1. Its pathway is energy metabolism; nitrogen metabolism. In the presence of 10 mM allantoin, the activity is reduced more than 25%. Forms L-glutamate from L-glutamine and 2-oxoglutarate. Represents an alternative pathway to L-glutamate dehydrogenase for the biosynthesis of L-glutamate. Participates with glutamine synthetase in ammonia assimilation processes. The enzyme is specific for NADH, L-glutamine and 2-oxoglutarate. The sequence is that of Glutamate synthase [NADH] (glt1) from Schizosaccharomyces pombe (strain 972 / ATCC 24843) (Fission yeast).